Reading from the N-terminus, the 462-residue chain is MQEGKISQIIGPVVDVDFPEGQLPAILDALSIAKPDGTKIVLETQQHLGEERVRTVAMESTDGLIRGMAVENTGRPIQAPVGEGVLGRMLNVVGDPIDGRGPVDAKKTYSIHRSAPKFEDLSTKAEMFETGIKVIDLLEPYSRGGKTGLFGGAGVGKTVLIMELINNIAKQQSGYSVFAGVGERTREGNDLWHEMMESGVIDKTALVFGQMNEPPGARARVALTGLSIAEYFRDEENRDVLLFIDNIFRFTQAGSEVSALLGRMPSAVGYQPTLATEMGELQDRITSTKNGSVTSVQAIYVPADDLTDPAPATAFAHLDATTVLSRSIAELGIYPAVDPLDSTSRILDPNIVGDDHYDTAQAVKMILQRYKDLQDIIAILGMDELSDEDKLVVSRARKVQRFLSQPFFVAEAFTGLSGKYVKLEETIKGFKEIIAGKHDNLPENAFYLVGTIEEAIEKAKTL.

Residue 151-158 coordinates ATP; sequence GGAGVGKT.

It belongs to the ATPase alpha/beta chains family. As to quaternary structure, F-type ATPases have 2 components, CF(1) - the catalytic core - and CF(0) - the membrane proton channel. CF(1) has five subunits: alpha(3), beta(3), gamma(1), delta(1), epsilon(1). CF(0) has four main subunits: a(1), b(1), b'(1) and c(9-12).

The protein localises to the cell inner membrane. The catalysed reaction is ATP + H2O + 4 H(+)(in) = ADP + phosphate + 5 H(+)(out). In terms of biological role, produces ATP from ADP in the presence of a proton gradient across the membrane. The catalytic sites are hosted primarily by the beta subunits. This chain is ATP synthase subunit beta, found in Chlorobium phaeovibrioides (strain DSM 265 / 1930) (Prosthecochloris vibrioformis (strain DSM 265)).